The primary structure comprises 180 residues: ATP-dependent protease subunit HslV (180 aa).

Thr5 is a catalytic residue. Positions 165, 168, and 171 each coordinate Na(+).

This sequence belongs to the peptidase T1B family. HslV subfamily. As to quaternary structure, a double ring-shaped homohexamer of HslV is capped on each side by a ring-shaped HslU homohexamer. The assembly of the HslU/HslV complex is dependent on binding of ATP.

Its subcellular location is the cytoplasm. It catalyses the reaction ATP-dependent cleavage of peptide bonds with broad specificity.. Allosterically activated by HslU binding. Functionally, protease subunit of a proteasome-like degradation complex believed to be a general protein degrading machinery. The polypeptide is ATP-dependent protease subunit HslV (Helicobacter pylori (strain P12)).